A 596-amino-acid chain; its full sequence is Elongation factor 4 (596 aa).

Residues 2 to 184 (KHIRNFSIIA…TIVAQIPSPE (183 aa)) enclose the tr-type G domain. GTP contacts are provided by residues 14 to 19 (DHGKST) and 131 to 134 (NKID).

This sequence belongs to the TRAFAC class translation factor GTPase superfamily. Classic translation factor GTPase family. LepA subfamily.

It is found in the cell inner membrane. It catalyses the reaction GTP + H2O = GDP + phosphate + H(+). In terms of biological role, required for accurate and efficient protein synthesis under certain stress conditions. May act as a fidelity factor of the translation reaction, by catalyzing a one-codon backward translocation of tRNAs on improperly translocated ribosomes. Back-translocation proceeds from a post-translocation (POST) complex to a pre-translocation (PRE) complex, thus giving elongation factor G a second chance to translocate the tRNAs correctly. Binds to ribosomes in a GTP-dependent manner. In Shewanella amazonensis (strain ATCC BAA-1098 / SB2B), this protein is Elongation factor 4.